Here is a 106-residue protein sequence, read N- to C-terminus: Small ribosomal subunit protein uS10 (106 aa).

This sequence belongs to the universal ribosomal protein uS10 family. Part of the 30S ribosomal subunit.

Functionally, involved in the binding of tRNA to the ribosomes. The chain is Small ribosomal subunit protein uS10 from Pyrobaculum calidifontis (strain DSM 21063 / JCM 11548 / VA1).